The chain runs to 442 residues: Gamma-glutamyl phosphate reductase (442 aa).

Belongs to the gamma-glutamyl phosphate reductase family.

It is found in the cytoplasm. It catalyses the reaction L-glutamate 5-semialdehyde + phosphate + NADP(+) = L-glutamyl 5-phosphate + NADPH + H(+). It participates in amino-acid biosynthesis; L-proline biosynthesis; L-glutamate 5-semialdehyde from L-glutamate: step 2/2. Functionally, catalyzes the NADPH-dependent reduction of L-glutamate 5-phosphate into L-glutamate 5-semialdehyde and phosphate. The product spontaneously undergoes cyclization to form 1-pyrroline-5-carboxylate. This Campylobacter curvus (strain 525.92) protein is Gamma-glutamyl phosphate reductase.